The sequence spans 160 residues: Oligoribonuclease (160 aa).

Residues 8-158 form the Exonuclease domain; the sequence is LIWIDLEMTG…YNKLKKKTLI (151 aa). Residue Tyr-129 is part of the active site.

The protein belongs to the oligoribonuclease family.

The protein resides in the cytoplasm. In terms of biological role, 3'-to-5' exoribonuclease specific for small oligoribonucleotides. This Buchnera aphidicola subsp. Baizongia pistaciae (strain Bp) protein is Oligoribonuclease (orn).